A 1400-amino-acid polypeptide reads, in one-letter code: DNA-directed RNA polymerase subunit beta' (1400 aa).

Residues Cys71, Cys73, Cys86, and Cys89 each contribute to the Zn(2+) site. 3 residues coordinate Mg(2+): Asp462, Asp464, and Asp466. Residues Cys811, Cys885, Cys892, and Cys895 each contribute to the Zn(2+) site.

Belongs to the RNA polymerase beta' chain family. In terms of assembly, the RNAP catalytic core consists of 2 alpha, 1 beta, 1 beta' and 1 omega subunit. When a sigma factor is associated with the core the holoenzyme is formed, which can initiate transcription. Mg(2+) is required as a cofactor. Requires Zn(2+) as cofactor.

The catalysed reaction is RNA(n) + a ribonucleoside 5'-triphosphate = RNA(n+1) + diphosphate. DNA-dependent RNA polymerase catalyzes the transcription of DNA into RNA using the four ribonucleoside triphosphates as substrates. The sequence is that of DNA-directed RNA polymerase subunit beta' from Brucella canis (strain ATCC 23365 / NCTC 10854 / RM-666).